Consider the following 28-residue polypeptide: Chassatide C11 (28 aa).

3 disulfide bridges follow: C3/C19, C7/C21, and C12/C26. At M16 the chain carries Methionine sulfoxide; in form chassatide chaC11A.

It belongs to the cyclotide family. Bracelet subfamily. In terms of tissue distribution, expressed in fruit, pedicel and stem but not in leaf and root (at protein level).

Functionally, chassatide C11: Probably participates in a plant defense mechanism. Active against E.coli ATCC 25922 (MIC=8.5 uM) but not against S.aureus ATCC 12600 or S.epidermidis ATCC 14990. Has cytotoxic and hemolytic activity. Its function is as follows. Chassatide C11A: Probably participates in a plant defense mechanism. Has no activity against bacteria up to a concentration of 80 uM. Has no cytotoxic and no hemolytic activity. The polypeptide is Chassatide C11 (Chassalia chartacea (Chassalia curviflora)).